We begin with the raw amino-acid sequence, 519 residues long: Cytochrome P450 4A22 (519 aa).

A propeptide spanning residues 1-4 (MSVS) is cleaved from the precursor. Glutamate 321 provides a ligand contact to heme. Position 440 is a phosphoserine (serine 440). Position 457 (cysteine 457) interacts with heme.

This sequence belongs to the cytochrome P450 family.

The protein localises to the endoplasmic reticulum membrane. It localises to the microsome membrane. The enzyme catalyses an omega-methyl-long-chain fatty acid + reduced [NADPH--hemoprotein reductase] + O2 = an omega-hydroxy-long-chain fatty acid + oxidized [NADPH--hemoprotein reductase] + H2O + H(+). Functionally, catalyzes the omega- and (omega-1)-hydroxylation of various fatty acids such as laurate and palmitate. Shows no activity towards arachidonic acid and prostaglandin A1. Lacks functional activity in the kidney and does not contribute to renal 20-hydroxyeicosatetraenoic acid (20-HETE) biosynthesis. This chain is Cytochrome P450 4A22 (CYP4A22), found in Homo sapiens (Human).